The sequence spans 251 residues: SPbeta prophage-derived putative antirepressor protein YoqD (251 aa).

This is SPbeta prophage-derived putative antirepressor protein YoqD (yoqD) from Bacillus subtilis (strain 168).